The following is a 347-amino-acid chain: Heat-inducible transcription repressor HrcA (347 aa).

The protein belongs to the HrcA family.

Its function is as follows. Negative regulator of class I heat shock genes (grpE-dnaK-dnaJ and groELS operons). Prevents heat-shock induction of these operons. The protein is Heat-inducible transcription repressor HrcA of Mycobacterium sp. (strain JLS).